The sequence spans 390 residues: Chaperone protein DnaJ (390 aa).

One can recognise a J domain in the interval 6 to 70 (DYYEILGVPR…QKRAQYDQFG (65 aa)). The CR-type zinc-finger motif lies at 146 to 228 (GSEKEIYVTR…CHGTGKVRRK (83 aa)). Zn(2+) contacts are provided by Cys-159, Cys-162, Cys-176, Cys-179, Cys-202, Cys-205, Cys-216, and Cys-219. CXXCXGXG motif repeat units follow at residues 159 to 166 (CPTCKGKG), 176 to 183 (CDMCNGTG), 202 to 209 (CPKCHGTG), and 216 to 223 (CHECHGTG).

The protein belongs to the DnaJ family. As to quaternary structure, homodimer. Zn(2+) is required as a cofactor.

The protein localises to the cytoplasm. Its function is as follows. Participates actively in the response to hyperosmotic and heat shock by preventing the aggregation of stress-denatured proteins and by disaggregating proteins, also in an autonomous, DnaK-independent fashion. Unfolded proteins bind initially to DnaJ; upon interaction with the DnaJ-bound protein, DnaK hydrolyzes its bound ATP, resulting in the formation of a stable complex. GrpE releases ADP from DnaK; ATP binding to DnaK triggers the release of the substrate protein, thus completing the reaction cycle. Several rounds of ATP-dependent interactions between DnaJ, DnaK and GrpE are required for fully efficient folding. Also involved, together with DnaK and GrpE, in the DNA replication of plasmids through activation of initiation proteins. The polypeptide is Chaperone protein DnaJ (Dictyoglomus thermophilum (strain ATCC 35947 / DSM 3960 / H-6-12)).